The sequence spans 1174 residues: Tight junction protein 2 (1174 aa).

Positions 10–97 (TVTLQKDSKR…IAAIVVKRPR (88 aa)) constitute a PDZ 1 domain. Ser107, Ser127, Ser130, Ser140, Ser145, Ser147, Ser151, Ser173, Ser195, and Ser217 each carry phosphoserine. Positions 125–137 (GRSARSGYSERSR) are enriched in basic and acidic residues. The disordered stretch occupies residues 125–290 (GRSARSGYSE…AGQPDSDRPI (166 aa)). Basic and acidic residues predominate over residues 146–214 (RSWEDSPERG…DYGRPGERSH (69 aa)). The segment covering 220-235 (RGYDRGYDRGYDRGYD) has biased composition (basic and acidic residues). Ser239 is modified (phosphoserine). Composition is skewed to basic and acidic residues over residues 243-266 (EYGRRTQPDARHAGSRSRSREHLR) and 274-288 (LRGRPDHAGQPDSDR). A PDZ 2 domain is found at 291–369 (GVLLMKSKAN…KLQLVVLRDS (79 aa)). Residues Ser309, Ser382, Ser384, Ser390, Ser399, Ser408, Ser414, and Ser415 each carry the phosphoserine modification. The disordered stretch occupies residues 391–430 (EIESNRSFSPEERRQQYSDYDYHSSNEKLKERPNSREDMQ). Positions 399 to 430 (SPEERRQQYSDYDYHSSNEKLKERPNSREDMQ) are enriched in basic and acidic residues. Thr439 is subject to Phosphothreonine. Residues 456–490 (ENSKEPRYQEEPPAPQPKAAPRTFLRPSPEDEAIY) form a disordered region. Ser483 bears the Phosphoserine mark. A PDZ 3 domain is found at 493-574 (NTKMVRFKKG…GEMVTILAQS (82 aa)). At Tyr558 the chain carries Phosphotyrosine. In terms of domain architecture, SH3 spans 588 to 653 (GDSFFIRSHF…PNKSRAEQMA (66 aa)). One can recognise a Guanylate kinase-like domain in the interval 679-860 (MKKNLRKSRE…WFGSLKDTIQ (182 aa)). A phosphoserine mark is found at Ser686 and Ser886. Thr889 is subject to Phosphothreonine. Phosphoserine occurs at positions 897 and 904. Disordered stretches follow at residues 904–1065 (SDFE…VLGK) and 1100–1174 (DIYA…DTEL). Phosphothreonine is present on residues Thr909 and Thr917. Basic and acidic residues predominate over residues 940–951 (VQHEESIRKPSP). Residues Ser950, Ser962, Ser970, Ser990, and Ser1052 each carry the phosphoserine modification. Over residues 978-1000 (EPPKAKTQNREESFDISRSHDYK) the composition is skewed to basic and acidic residues. The span at 1044–1056 (ESEEVGEGSEEQE) shows a compositional bias: acidic residues. At Tyr1102 the chain carries Phosphotyrosine. A phosphoserine mark is found at Ser1131 and Ser1143. Residues 1150 to 1159 (YRQQLSEHSK) are compositionally biased toward basic and acidic residues. The interval 1172 to 1174 (TEL) is interaction with SCRIB.

It belongs to the MAGUK family. Homodimer. Interacts (via PDZ2 domain) with TJP1/ZO1 (via PDZ2 domain). Interacts with UBN1. Interacts with SCRIB. Interacts with OCLN. Interacts with SAFB in the nucleus. Interacts with USP53 (via the C-terminal region). Interacts with claudins, including CLDN1, CLDN2, CLDN3, CLDN5 and CLDN7. Interacts with CLDN18. Interacts (via N-terminus) with CTNNA1. Phosphorylated.

The protein resides in the cell junction. It localises to the adherens junction. The protein localises to the cell membrane. It is found in the nucleus. Its subcellular location is the tight junction. Plays a role in tight junctions and adherens junctions. Acts as a positive regulator of RANKL-induced osteoclast differentiation, potentially via mediating downstream transcriptional activity. The sequence is that of Tight junction protein 2 from Canis lupus familiaris (Dog).